A 332-amino-acid chain; its full sequence is Tetraacyldisaccharide 4'-kinase (332 aa).

58-65 (TVGGSGKT) lines the ATP pocket.

The protein belongs to the LpxK family.

The catalysed reaction is a lipid A disaccharide + ATP = a lipid IVA + ADP + H(+). The protein operates within glycolipid biosynthesis; lipid IV(A) biosynthesis; lipid IV(A) from (3R)-3-hydroxytetradecanoyl-[acyl-carrier-protein] and UDP-N-acetyl-alpha-D-glucosamine: step 6/6. Its function is as follows. Transfers the gamma-phosphate of ATP to the 4'-position of a tetraacyldisaccharide 1-phosphate intermediate (termed DS-1-P) to form tetraacyldisaccharide 1,4'-bis-phosphate (lipid IVA). In Shewanella piezotolerans (strain WP3 / JCM 13877), this protein is Tetraacyldisaccharide 4'-kinase.